A 263-amino-acid chain; its full sequence is R-spondin-1 (263 aa).

An N-terminal signal peptide occupies residues 1–20; the sequence is MRLGLCVVALVLSWTHLTIS. 2 FU repeats span residues 34–85 and 91–135; these read AEGS…GYFD and MNKC…GSSA. Disulfide bonds link Cys-40/Cys-47, Cys-44/Cys-53, Cys-56/Cys-75, Cys-79/Cys-94, Cys-97/Cys-105, Cys-102/Cys-111, Cys-114/Cys-125, Cys-129/Cys-142, Cys-148/Cys-190, Cys-159/Cys-166, and Cys-199/Cys-206. A glycan (N-linked (GlcNAc...) asparagine) is linked at Asn-137. The region spanning 147-207 is the TSP type-1 domain; the sequence is QCEMSEWSPW…RCTVRRVPCP (61 aa). Trp-153 and Trp-156 each carry a C-linked (Man) tryptophan glycan. The segment at 206 to 263 is disordered; sequence CPEGQKRRKGGQGRRENANRNLARKESKEAGAGSRRRKGQQQQQQQGTVGPLTSAGPA. Positions 218-234 are enriched in basic and acidic residues; it reads GRRENANRNLARKESKE.

Belongs to the R-spondin family. As to quaternary structure, interacts with the extracellular domain of FZD8 and LRP6. It however does not form a ternary complex with FZD8 and LRP6. Interacts with WNT1. Binds heparin. Interacts with ZNRF3; promoting indirect interaction between ZNRF3 and LGR4 and membrane clearance of ZNRF3. Interacts with LGR4, LGR5 and LGR6. Identified in a complex composed of RNF43, LGR5 and RSPO1. Interacts (via FU repeats) with KREM1. In terms of processing, C-, and N-glycosylated. N-glycosylation at Asn-137, negatively influences its secretion and enhancing effect on Wnt/beta-catenin signaling. C-mannosylation at Trp-156 by DPY19L3 is required for its secretion and regulates the enhancing activity of Wnt signaling. Abundantly expressed in adrenal glands, ovary, testis, thyroid and trachea but not in bone marrow, spinal cord, stomach, leukocytes colon, small intestine, prostate, thymus and spleen.

It is found in the secreted. The protein resides in the nucleus. Its function is as follows. Activator of the canonical Wnt signaling pathway by acting as a ligand for LGR4-6 receptors. Upon binding to LGR4-6 (LGR4, LGR5 or LGR6), LGR4-6 associate with phosphorylated LRP6 and frizzled receptors that are activated by extracellular Wnt receptors, triggering the canonical Wnt signaling pathway to increase expression of target genes. Also regulates the canonical Wnt/beta-catenin-dependent pathway and non-canonical Wnt signaling by acting as an inhibitor of ZNRF3, an important regulator of the Wnt signaling pathway. Acts as a ligand for frizzled FZD8 and LRP6. May negatively regulate the TGF-beta pathway. Has a essential roles in ovary determination. Regulates Wnt signaling by antagonizing DKK1/KREM1-mediated internalization of LRP6 through an interaction with KREM1. This chain is R-spondin-1 (RSPO1), found in Homo sapiens (Human).